Consider the following 776-residue polypeptide: Protein translocase subunit SecA 2 (776 aa).

ATP contacts are provided by residues Gln80, 98-102 (GEGKT), and Asp486.

This sequence belongs to the SecA family. Monomer and homodimer. Part of the essential Sec protein translocation apparatus which comprises SecA, SecYEG and auxiliary proteins SecDF. Other proteins may also be involved.

It localises to the cell membrane. The protein localises to the cytoplasm. The enzyme catalyses ATP + H2O + cellular proteinSide 1 = ADP + phosphate + cellular proteinSide 2.. In terms of biological role, part of the Sec protein translocase complex. Interacts with the SecYEG preprotein conducting channel. Has a central role in coupling the hydrolysis of ATP to the transfer of proteins into and across the cell membrane, serving as an ATP-driven molecular motor driving the stepwise translocation of polypeptide chains across the membrane. The polypeptide is Protein translocase subunit SecA 2 (Listeria monocytogenes serotype 1/2a (strain 10403S)).